Consider the following 131-residue polypeptide: Small ribosomal subunit protein uS8 (131 aa).

This sequence belongs to the universal ribosomal protein uS8 family. As to quaternary structure, part of the 30S ribosomal subunit. Contacts proteins S5 and S12.

In terms of biological role, one of the primary rRNA binding proteins, it binds directly to 16S rRNA central domain where it helps coordinate assembly of the platform of the 30S subunit. The chain is Small ribosomal subunit protein uS8 from Burkholderia multivorans (strain ATCC 17616 / 249).